The sequence spans 95 residues: Aspartyl/glutamyl-tRNA(Asn/Gln) amidotransferase subunit C (95 aa).

It belongs to the GatC family. As to quaternary structure, heterotrimer of A, B and C subunits.

It catalyses the reaction L-glutamyl-tRNA(Gln) + L-glutamine + ATP + H2O = L-glutaminyl-tRNA(Gln) + L-glutamate + ADP + phosphate + H(+). The catalysed reaction is L-aspartyl-tRNA(Asn) + L-glutamine + ATP + H2O = L-asparaginyl-tRNA(Asn) + L-glutamate + ADP + phosphate + 2 H(+). Allows the formation of correctly charged Asn-tRNA(Asn) or Gln-tRNA(Gln) through the transamidation of misacylated Asp-tRNA(Asn) or Glu-tRNA(Gln) in organisms which lack either or both of asparaginyl-tRNA or glutaminyl-tRNA synthetases. The reaction takes place in the presence of glutamine and ATP through an activated phospho-Asp-tRNA(Asn) or phospho-Glu-tRNA(Gln). This is Aspartyl/glutamyl-tRNA(Asn/Gln) amidotransferase subunit C from Rhizobium rhizogenes (strain K84 / ATCC BAA-868) (Agrobacterium radiobacter).